A 72-amino-acid chain; its full sequence is uncharacterized protein (72 aa).

A disordered region spans residues 52–72; the sequence is KGGRQRDEAVGVEELCKQHKE. A compositionally biased stretch (basic and acidic residues) spans 55-72; the sequence is RQRDEAVGVEELCKQHKE.

Belongs to the YiiE family.

This is an uncharacterized protein from Escherichia coli O6:H1 (strain CFT073 / ATCC 700928 / UPEC).